A 162-amino-acid polypeptide reads, in one-letter code: UPF0303 protein RL3365 (162 aa).

Belongs to the UPF0303 family.

The chain is UPF0303 protein RL3365 from Rhizobium johnstonii (strain DSM 114642 / LMG 32736 / 3841) (Rhizobium leguminosarum bv. viciae).